An 893-amino-acid polypeptide reads, in one-letter code: Serine/threonine-protein kinase/endoribonuclease IRE1 (893 aa).

Positions 1 to 19 (MRSLRRVLLQLVLLAGVAF) are cleaved as a signal peptide. The Lumenal portion of the chain corresponds to 20 to 379 (RGVRFDDAAD…NSVTKFSYRW (360 aa)). 4 N-linked (GlcNAc...) asparagine glycosylation sites follow: Asn105, Asn158, Asn259, and Asn351. Residues 380–397 (LFPTFLMLLIMACLVKLA) form a helical membrane-spanning segment. Topologically, residues 398-893 (DASKYCRQFV…FSKYFLGSSA (496 aa)) are cytoplasmic. The interval 451–478 (ASDKEGNGTGGSTEAQSNKAHDSTNVEL) is disordered. Residues 491 to 759 (CVYSKEIGKG…AVYVMHHPFF (269 aa)) form the Protein kinase domain. ATP is bound by residues 497 to 505 (IGKGSNGTV) and Lys519. Asp625 acts as the Proton acceptor in catalysis. The KEN domain occupies 762–890 (PELCLSFLRD…EEAFSKYFLG (129 aa)).

Belongs to the protein kinase superfamily. Ser/Thr protein kinase family. As to quaternary structure, homodimer; disulfide-linked. Dimer formation is driven by hydrophobic interactions within the N-terminal luminal domains and stabilized by disulfide bridges. Post-translationally, autophosphorylated. In terms of tissue distribution, expressed in roots, nodes, internodes, leaf sheaths, leaf blades, young ears and mature ears.

The protein localises to the endoplasmic reticulum membrane. The catalysed reaction is L-seryl-[protein] + ATP = O-phospho-L-seryl-[protein] + ADP + H(+). It catalyses the reaction L-threonyl-[protein] + ATP = O-phospho-L-threonyl-[protein] + ADP + H(+). Its function is as follows. Involved in endoplasmic reticulum (ER) stress response. Senses unfolded proteins in the lumen of the ER via its N-terminal domain which leads to enzyme auto-activation. The active endoribonuclease domain splices bZIP50 mRNA to generate a new C-terminus, converting it into a potent unfolded-protein response (UPR) transcriptional activator, which then induces transcription of UPR target genes, such as luminal-binding protein (BiP) chaperones. The polypeptide is Serine/threonine-protein kinase/endoribonuclease IRE1 (Oryza sativa subsp. japonica (Rice)).